Consider the following 49-residue polypeptide: DNA-directed RNA polymerase subunit Rpo12 (49 aa).

The Zn(2+) site is built by Cys-11, Cys-27, and Cys-30.

The protein belongs to the archaeal Rpo12/eukaryotic RPC10 RNA polymerase subunit family. Part of the RNA polymerase complex. It depends on Zn(2+) as a cofactor.

It localises to the cytoplasm. It carries out the reaction RNA(n) + a ribonucleoside 5'-triphosphate = RNA(n+1) + diphosphate. In terms of biological role, DNA-dependent RNA polymerase (RNAP) catalyzes the transcription of DNA into RNA using the four ribonucleoside triphosphates as substrates. In Pyrococcus abyssi (strain GE5 / Orsay), this protein is DNA-directed RNA polymerase subunit Rpo12.